We begin with the raw amino-acid sequence, 1202 residues long: Caskin-2 (1202 aa).

6 ANK repeats span residues 48 to 77, 81 to 110, 114 to 143, 147 to 176, 188 to 217, and 220 to 249; these read DGFS…TVDI, NGMR…AVNA, DGQI…NPCL, AKKT…CVAL, NYTT…EINR, and KTGT…DVNI. Tyr253 carries the post-translational modification Phosphotyrosine. The SH3 domain occupies 281–347; it reads SGILKVRALK…PPGIVEVVSK (67 aa). The tract at residues 355 to 460 is disordered; that stretch reads RLPSAPTPLR…GLHPPSLADN (106 aa). Phosphoserine is present on residues Ser358, Ser393, Ser396, Ser403, Ser406, and Ser409. Residues 415 to 425 show a composition bias toward polar residues; that stretch reads SAGSGQSSEGT. The residue at position 471 (Ser471) is a Phosphoserine. SAM domains are found at residues 489–552 and 558–622; these read KDAQ…LSIA and YIPT…LAEL. Disordered stretches follow at residues 676–1104 and 1116–1181; these read LQAA…APKP and GPKL…STKH. The residue at position 725 (Ser725) is a Phosphoserine. Positions 731–740 are enriched in basic and acidic residues; it reads NLPEGTERPP. Residues 765–774 show a composition bias toward pro residues; the sequence is SPAPGPPPGA. Ser858, Ser877, Ser878, and Ser892 each carry phosphoserine. Pro residues predominate over residues 913-923; the sequence is PSEPPGPPAPA. Over residues 940–949 the composition is skewed to low complexity; the sequence is PPSRGSSGEG. Pro residues-rich tracts occupy residues 966–978 and 1018–1030; these read PAGP…PVPP and PAAP…PGES. The segment covering 1031 to 1051 has biased composition (low complexity); that stretch reads PPASSLPQPEPSSLPAQGVPT. Pro residues-rich tracts occupy residues 1052–1068 and 1124–1133; these read PLAP…PCPG and GPRPVPPPRP. Positions 1135–1151 are enriched in polar residues; that stretch reads STGTVGPGQAQQRLEQT. The span at 1161–1172 shows a compositional bias: basic and acidic residues; the sequence is AAEKSIGTKEQE.

May not bind CASK.

The protein localises to the cytoplasm. The chain is Caskin-2 (CASKIN2) from Homo sapiens (Human).